The chain runs to 286 residues: Energy-coupling factor transporter ATP-binding protein EcfA2 (286 aa).

In terms of domain architecture, ABC transporter spans 3-246 (IQFNQVSYIY…KTQLLKWHIE (244 aa)). 40–47 (GQTGSGKS) contacts ATP.

The protein belongs to the ABC transporter superfamily. Energy-coupling factor EcfA family. Forms a stable energy-coupling factor (ECF) transporter complex composed of 2 membrane-embedded substrate-binding proteins (S component), 2 ATP-binding proteins (A component) and 2 transmembrane proteins (T component).

It localises to the cell membrane. ATP-binding (A) component of a common energy-coupling factor (ECF) ABC-transporter complex. Unlike classic ABC transporters this ECF transporter provides the energy necessary to transport a number of different substrates. This is Energy-coupling factor transporter ATP-binding protein EcfA2 from Staphylococcus epidermidis (strain ATCC 12228 / FDA PCI 1200).